Here is a 134-residue protein sequence, read N- to C-terminus: Small ribosomal subunit protein uS9c (134 aa).

The protein belongs to the universal ribosomal protein uS9 family.

Its subcellular location is the plastid. It localises to the chloroplast. The sequence is that of Small ribosomal subunit protein uS9c (rps9) from Guillardia theta (Cryptophyte).